The primary structure comprises 1503 residues: Translocase of chloroplast 159, chloroplastic (1503 aa).

Residues 1–24 show a composition bias toward polar residues; the sequence is MDSKSVTPEPTNPFYASSGQSGKT. The disordered stretch occupies residues 1–210; it reads MDSKSVTPEP…GGKVDVDDKS (210 aa). Residues 21-37 traverse the membrane as a helical segment; it reads SGKTYASVVAAAAAAAA. The residue at position 71 (Ser71) is a Phosphoserine. Composition is skewed to basic and acidic residues over residues 85-98 and 176-210; these read KVSD…KEDS and SESK…DDKS. Phosphoserine occurs at positions 210, 281, and 288. 2 disordered regions span residues 298-338 and 429-464; these read KFTS…DVEK and VHNK…SEGD. Basic and acidic residues predominate over residues 447-456; the sequence is ESDKATEEGG. 7 positions are modified to phosphoserine: Ser448, Ser461, Ser589, Ser609, Ser630, Ser632, and Ser665. Residues 610-633 are disordered; it reads FGGKEVDQEPSGEGVTRVDGSESE. A coiled-coil region spans residues 781–804; that stretch reads EEEKQKLEKLQSLRVKFLRLLQRL. The region spanning 853–1087 is the AIG1-type G domain; the sequence is IFSLNILVLG…RPQEPLDHRK (235 aa). A G1 region spans residues 862 to 869; the sequence is GKAGVGKS. Residues 865–870 and 884–889 each bind GTP; these read GVGKSA and DAFGLS. Position 869 (Ser869) interacts with Mg(2+). The tract at residues 884 to 887 is homodimerization; the sequence is DAFG. Residues 889-893 are G2; sequence STTSV. Positions 909–912 are G3; it reads DTPG. The homodimerization stretch occupies residues 947–952; sequence RLDTQT. The interval 981–984 is G4; that stretch reads THAA. GTP contacts are provided by residues His982 and 1035 to 1036; that span reads EN. Positions 1035–1037 are G5; that stretch reads ENH. Residues 1175–1203 adopt a coiled-coil conformation; it reads DYRVKLLQKKQWREELKRMKEMKKNGKKL. Residues 1203 to 1222 are disordered; that stretch reads LGESEFGYPGEEDDPENGAP.

Belongs to the TRAFAC class TrmE-Era-EngA-EngB-Septin-like GTPase superfamily. AIG1/Toc34/Toc159-like paraseptin GTPase family. TOC159 subfamily. In terms of assembly, homodimer and heterodimer with TOC33. Part of the TOC core complex that includes 1 protein for the specific recognition of transit peptides surrounded by a ring composed of four proteins forming translocation channels, and four to five GTP-binding proteins providing energy. This core complex can interact with components of the TIC complex to form a larger import complex. Chloroplastic protein precursor such as prSS (precursor of the RuBisCO small subunit) interacts with these complexes. The TOC complex contains a specific subset of polar lipids such as digalactosyldiacylglyceride (DGDG), phosphatidylcholine (PC) and phosphatidylglycerol (PG). Interacts with SP1. Mg(2+) serves as cofactor. Post-translationally, phosphorylated by KOC1.

The protein localises to the plastid. Its subcellular location is the chloroplast outer membrane. It is found in the cytoplasm. Functionally, GTPase involved in protein precursor import into chloroplasts. Seems to recognize chloroplast-destined precursor proteins and regulate their presentation to the translocation channel through GTP hydrolysis. Required for chloroplast biogenesis. Probably specialized in the import of nuclear encoded photosynthetic preproteins from the cytoplasm to the chloroplast. The sequence is that of Translocase of chloroplast 159, chloroplastic from Arabidopsis thaliana (Mouse-ear cress).